Here is a 186-residue protein sequence, read N- to C-terminus: DNA damage up-regulated protein (186 aa).

The interval 147–166 (ATENGEGCRPARDPASSPSS) is disordered.

In terms of assembly, interacts with DNA damage response proteins ATR, H2AX, PCNA, RAD18 and RAD51C. Forms a complex with H2AX and RAD18 following DDUP phosphorylation. Post-translationally, phosphorylated in an ATR-dependent manner; phosphorylation is required for interaction with H2AX and RAD18 and for DDUP-mediated DNA damage repair.

The protein localises to the nucleus. It localises to the chromosome. Promotes DNA damage repair through both homologous recombination repair (HRR) and post-replication repair (PRR) mechanisms. Enhances the retention of DNA damage response protein RAD18 at sites of DNA damage. This allows for HRR via association of RAD18 with RAD51C and for PRR via RAD18-mediated promotion of PCNA monoubiquitination. The protein is DNA damage up-regulated protein of Homo sapiens (Human).